Here is a 674-residue protein sequence, read N- to C-terminus: DNA ligase (674 aa).

Residues 35–39, 82–83, and Glu116 contribute to the NAD(+) site; these read DAEYD and SL. The active-site N6-AMP-lysine intermediate is the Lys118. Residues Arg139, Glu174, Lys282, and Lys306 each contribute to the NAD(+) site. The Zn(2+) site is built by Cys400, Cys403, Cys418, and Cys424. One can recognise a BRCT domain in the interval 593–674; that stretch reads SYVSLIHGKT…WLQYIQPNKV (82 aa).

The protein belongs to the NAD-dependent DNA ligase family. LigA subfamily. The cofactor is Mg(2+). Requires Mn(2+) as cofactor.

It carries out the reaction NAD(+) + (deoxyribonucleotide)n-3'-hydroxyl + 5'-phospho-(deoxyribonucleotide)m = (deoxyribonucleotide)n+m + AMP + beta-nicotinamide D-nucleotide.. In terms of biological role, DNA ligase that catalyzes the formation of phosphodiester linkages between 5'-phosphoryl and 3'-hydroxyl groups in double-stranded DNA using NAD as a coenzyme and as the energy source for the reaction. It is essential for DNA replication and repair of damaged DNA. This is DNA ligase from Ehrlichia ruminantium (strain Welgevonden).